Here is an 84-residue protein sequence, read N- to C-terminus: Exodeoxyribonuclease 7 small subunit (84 aa).

This sequence belongs to the XseB family. As to quaternary structure, heterooligomer composed of large and small subunits.

It localises to the cytoplasm. The catalysed reaction is Exonucleolytic cleavage in either 5'- to 3'- or 3'- to 5'-direction to yield nucleoside 5'-phosphates.. Its function is as follows. Bidirectionally degrades single-stranded DNA into large acid-insoluble oligonucleotides, which are then degraded further into small acid-soluble oligonucleotides. The sequence is that of Exodeoxyribonuclease 7 small subunit from Yersinia pseudotuberculosis serotype O:1b (strain IP 31758).